The following is a 282-amino-acid chain: Phosphatidylglycerol--prolipoprotein diacylglyceryl transferase (282 aa).

Helical transmembrane passes span 19–39 (IGPF…VFGW), 58–78 (ISLV…ILGG), and 104–124 (GGMS…WFAY). Position 149 (Arg149) interacts with a 1,2-diacyl-sn-glycero-3-phospho-(1'-sn-glycerol). Helical transmembrane passes span 190 to 210 (AGME…LGAL), 214 to 234 (GMIL…GEHF), and 250 to 270 (MGML…VLAI).

It belongs to the Lgt family.

Its subcellular location is the cell inner membrane. It carries out the reaction L-cysteinyl-[prolipoprotein] + a 1,2-diacyl-sn-glycero-3-phospho-(1'-sn-glycerol) = an S-1,2-diacyl-sn-glyceryl-L-cysteinyl-[prolipoprotein] + sn-glycerol 1-phosphate + H(+). It participates in protein modification; lipoprotein biosynthesis (diacylglyceryl transfer). Functionally, catalyzes the transfer of the diacylglyceryl group from phosphatidylglycerol to the sulfhydryl group of the N-terminal cysteine of a prolipoprotein, the first step in the formation of mature lipoproteins. This is Phosphatidylglycerol--prolipoprotein diacylglyceryl transferase from Bradyrhizobium diazoefficiens (strain JCM 10833 / BCRC 13528 / IAM 13628 / NBRC 14792 / USDA 110).